Reading from the N-terminus, the 271-residue chain is Isoprenyl transferase (271 aa).

The active site involves Asp-35. Residue Asp-35 participates in Mg(2+) binding. Substrate contacts are provided by residues 36–39 (GNGR), Trp-40, Arg-48, His-52, and 80–82 (STE). The Proton acceptor role is filled by Asn-83. Substrate is bound by residues Trp-84, Arg-86, Arg-207, and 213–215 (RIS). Residue Glu-226 participates in Mg(2+) binding.

Belongs to the UPP synthase family. In terms of assembly, homodimer. Mg(2+) is required as a cofactor.

Functionally, catalyzes the condensation of isopentenyl diphosphate (IPP) with allylic pyrophosphates generating different type of terpenoids. The polypeptide is Isoprenyl transferase (Enterococcus faecalis (strain ATCC 700802 / V583)).